The primary structure comprises 160 residues: Type IV major fimbrial protein FimA (160 aa).

A propeptide spans 1–7 (leader sequence); that stretch reads MKSLQKG. The residue at position 8 (F8) is an N-methylphenylalanine. A helical transmembrane segment spans residues 8-28; it reads FTLIELMIVVAIIGILAAFAI. Cysteines 63 and 106 form a disulfide.

It belongs to the N-Me-Phe pilin family. In terms of assembly, the pili are polar flexible filaments of about 5.4 nanometers diameter and 2.5 micrometers average length; they consist of only a single polypeptide chain arranged in a helical configuration of five subunits per turn in the assembled pilus.

It localises to the fimbrium. The protein localises to the membrane. Major component of the type IV fimbriae that plays an essential role in twitching motility, natural transformation, and protease secretion. The protein is Type IV major fimbrial protein FimA (fimA) of Dichelobacter nodosus (Bacteroides nodosus).